A 288-amino-acid chain; its full sequence is 2-hydroxy-6-oxononadienedioate/2-hydroxy-6-oxononatrienedioate hydrolase (288 aa).

The AB hydrolase-1 domain occupies 38–273 (VVLLHGSGPG…DCGHWAQWEH (236 aa)). The active-site Proton acceptor is the histidine 267.

It belongs to the AB hydrolase superfamily. MhpC family. In terms of assembly, homodimer.

The catalysed reaction is (2Z,4E)-2-hydroxy-6-oxonona-2,4-dienedioate + H2O = (2Z)-2-hydroxypenta-2,4-dienoate + succinate + H(+). It catalyses the reaction (2Z,4E,7E)-2-hydroxy-6-oxonona-2,4,7-trienedioate + H2O = (2Z)-2-hydroxypenta-2,4-dienoate + fumarate + H(+). It functions in the pathway aromatic compound metabolism; 3-phenylpropanoate degradation. Its function is as follows. Catalyzes the cleavage of the C5-C6 bond of 2-hydroxy-6-oxononadienedioate and 2-hydroxy-6-oxononatrienedioate, a dienol ring fission product of the bacterial meta-cleavage pathway for degradation of phenylpropionic acid. The chain is 2-hydroxy-6-oxononadienedioate/2-hydroxy-6-oxononatrienedioate hydrolase from Escherichia coli O139:H28 (strain E24377A / ETEC).